The sequence spans 177 residues: MSRVGKMPITIPAGVDVSIKEDQISVKGTGGTLNLARNPLVKVVSNDGKLNFEPANESREANAMSGTIRQLVNNMVVGVTKGFEKKLNLVGVGYKAAASNNKLNLQVGYSHPVNIDMPQGITVATATPTEIVIKGADRQRVGQIAAEIRAVRPPEPYKGKGIRYSDEKIVIKETKKK.

Belongs to the universal ribosomal protein uL6 family. In terms of assembly, part of the 50S ribosomal subunit.

Its function is as follows. This protein binds to the 23S rRNA, and is important in its secondary structure. It is located near the subunit interface in the base of the L7/L12 stalk, and near the tRNA binding site of the peptidyltransferase center. In Variovorax paradoxus (strain S110), this protein is Large ribosomal subunit protein uL6.